The primary structure comprises 511 residues: Chromosomal replication initiator protein DnaA (511 aa).

The interval 1–90 is domain I, interacts with DnaA modulators; the sequence is MSVELWQQCV…KRSSAPRAAP (90 aa). The interval 91–174 is domain II; it reads NAPLAAAASQ…QVEGALKHTS (84 aa). Residues 133–162 are disordered; sequence VAAHDEPSRDSFDPMAGASSQQAPARAEQR. Residues 135–144 show a composition bias toward basic and acidic residues; the sequence is AHDEPSRDSF. The tract at residues 175-391 is domain III, AAA+ region; it reads YLNRTFTFEN…GALKRVIAHS (217 aa). Residues Gly219, Gly221, Lys222, and Thr223 each coordinate ATP. Residues 392 to 511 form a domain IV, binds dsDNA region; sequence HFMGRDITIE…YKNLLRTLTT (120 aa).

It belongs to the DnaA family. As to quaternary structure, oligomerizes as a right-handed, spiral filament on DNA at oriC.

It is found in the cytoplasm. In terms of biological role, plays an essential role in the initiation and regulation of chromosomal replication. ATP-DnaA binds to the origin of replication (oriC) to initiate formation of the DNA replication initiation complex once per cell cycle. Binds the DnaA box (a 9 base pair repeat at the origin) and separates the double-stranded (ds)DNA. Forms a right-handed helical filament on oriC DNA; dsDNA binds to the exterior of the filament while single-stranded (ss)DNA is stabiized in the filament's interior. The ATP-DnaA-oriC complex binds and stabilizes one strand of the AT-rich DNA unwinding element (DUE), permitting loading of DNA polymerase. After initiation quickly degrades to an ADP-DnaA complex that is not apt for DNA replication. Binds acidic phospholipids. The protein is Chromosomal replication initiator protein DnaA of Pseudomonas savastanoi pv. phaseolicola (strain 1448A / Race 6) (Pseudomonas syringae pv. phaseolicola (strain 1448A / Race 6)).